Consider the following 164-residue polypeptide: MKSLTLLTICAVLSVSLSMNDLALDVVLDPDPAAEPAPAADSSASSSASSSSSSASDSSASASDSSDSDSSSSSSSSSSSESASAEAMAEDPAAATEPEVIMKRDLASVLLRRKRAAGPAAAAFTLTQVESLSEVCELNLACEHMAETAGIVAAYTAYYGPPPF.

The signal sequence occupies residues 1–18 (MKSLTLLTICAVLSVSLS). Positions 19–115 (MNDLALDVVL…LASVLLRRKR (97 aa)) are excised as a propeptide. The segment covering 30–95 (PDPAAEPAPA…EAMAEDPAAA (66 aa)) has biased composition (low complexity). Residues 30 to 99 (PDPAAEPAPA…EDPAAATEPE (70 aa)) form a disordered region. In terms of domain architecture, Gla spans 128–160 (QVESLSEVCELNLACEHMAETAGIVAAYTAYYG). The Ca(2+) site is built by Glu130, Glu134, and Glu137. Residues Glu130, Glu134, and Glu137 each carry the 4-carboxyglutamate modification. The cysteines at positions 136 and 142 are disulfide-linked.

Belongs to the osteocalcin/matrix Gla protein family. Post-translationally, gamma-carboxyglutamate residues are formed by vitamin K dependent carboxylation. These residues are essential for the binding of calcium.

The protein resides in the secreted. In terms of biological role, binds strongly to apatite and calcium. This is Osteocalcin 2b from Oncorhynchus mykiss (Rainbow trout).